A 244-amino-acid polypeptide reads, in one-letter code: 5-oxoprolinase subunit A (244 aa).

The protein belongs to the LamB/PxpA family. Forms a complex composed of PxpA, PxpB and PxpC.

The catalysed reaction is 5-oxo-L-proline + ATP + 2 H2O = L-glutamate + ADP + phosphate + H(+). Catalyzes the cleavage of 5-oxoproline to form L-glutamate coupled to the hydrolysis of ATP to ADP and inorganic phosphate. This chain is 5-oxoprolinase subunit A, found in Salmonella typhimurium (strain LT2 / SGSC1412 / ATCC 700720).